Here is a 172-residue protein sequence, read N- to C-terminus: 3-hydroxydecanoyl-[acyl-carrier-protein] dehydratase (172 aa).

Histidine 71 is an active-site residue.

The protein belongs to the thioester dehydratase family. FabA subfamily. In terms of assembly, homodimer.

It is found in the cytoplasm. It carries out the reaction a (3R)-hydroxyacyl-[ACP] = a (2E)-enoyl-[ACP] + H2O. The catalysed reaction is (3R)-hydroxydecanoyl-[ACP] = (2E)-decenoyl-[ACP] + H2O. It catalyses the reaction (2E)-decenoyl-[ACP] = (3Z)-decenoyl-[ACP]. It functions in the pathway lipid metabolism; fatty acid biosynthesis. Necessary for the introduction of cis unsaturation into fatty acids. Catalyzes the dehydration of (3R)-3-hydroxydecanoyl-ACP to E-(2)-decenoyl-ACP and then its isomerization to Z-(3)-decenoyl-ACP. Can catalyze the dehydratase reaction for beta-hydroxyacyl-ACPs with saturated chain lengths up to 16:0, being most active on intermediate chain length. The chain is 3-hydroxydecanoyl-[acyl-carrier-protein] dehydratase from Pectobacterium atrosepticum (strain SCRI 1043 / ATCC BAA-672) (Erwinia carotovora subsp. atroseptica).